The primary structure comprises 148 residues: Endoribonuclease YbeY (148 aa).

Residues histidine 102, histidine 106, and histidine 112 each contribute to the Zn(2+) site.

It belongs to the endoribonuclease YbeY family. It depends on Zn(2+) as a cofactor.

The protein resides in the cytoplasm. Single strand-specific metallo-endoribonuclease involved in late-stage 70S ribosome quality control and in maturation of the 3' terminus of the 16S rRNA. This chain is Endoribonuclease YbeY, found in Phytoplasma mali (strain AT).